Here is a 327-residue protein sequence, read N- to C-terminus: Phenylalanine--tRNA ligase alpha subunit (327 aa).

A Mg(2+)-binding site is contributed by glutamate 252.

It belongs to the class-II aminoacyl-tRNA synthetase family. Phe-tRNA synthetase alpha subunit type 1 subfamily. As to quaternary structure, tetramer of two alpha and two beta subunits. Mg(2+) serves as cofactor.

It is found in the cytoplasm. The enzyme catalyses tRNA(Phe) + L-phenylalanine + ATP = L-phenylalanyl-tRNA(Phe) + AMP + diphosphate + H(+). The chain is Phenylalanine--tRNA ligase alpha subunit from Vibrio vulnificus (strain CMCP6).